The primary structure comprises 402 residues: Propionate kinase (402 aa).

ATP-binding residues include Asn-11 and Lys-18. Asn-11 is a Mg(2+) binding site. Residue Arg-86 coordinates substrate. Asp-143 acts as the Proton donor/acceptor in catalysis. ATP is bound by residues His-175, 203 to 207 (HLGNG), 278 to 280 (DLR), and 326 to 330 (GIGEN).

The protein belongs to the acetokinase family. TdcD subfamily. Homodimer. The cofactor is Mg(2+).

The enzyme catalyses propanoate + ATP = propanoyl phosphate + ADP. Its pathway is amino-acid degradation; L-threonine degradation via propanoate pathway; propanoate from L-threonine: step 4/4. Its function is as follows. Catalyzes the conversion of propionyl phosphate and ADP to propionate and ATP. This chain is Propionate kinase, found in Salmonella typhimurium (strain D23580).